The sequence spans 323 residues: NADH-ubiquinone oxidoreductase chain 1 (323 aa).

8 consecutive transmembrane segments (helical) span residues 8 to 28 (LINP…LTLI), 75 to 95 (MFLI…APLP), 105 to 125 (LGIL…LGSG), 151 to 171 (LGLI…TTLM), 177 to 197 (MWLI…TLAE), 234 to 254 (ANIL…SSFM), 258 to 278 (ELTT…FLWV), and 298 to 318 (FLPI…SMLG).

Belongs to the complex I subunit 1 family. Core subunit of respiratory chain NADH dehydrogenase (Complex I) which is composed of 45 different subunits.

It localises to the mitochondrion inner membrane. The enzyme catalyses a ubiquinone + NADH + 5 H(+)(in) = a ubiquinol + NAD(+) + 4 H(+)(out). Core subunit of the mitochondrial membrane respiratory chain NADH dehydrogenase (Complex I) which catalyzes electron transfer from NADH through the respiratory chain, using ubiquinone as an electron acceptor. Essential for the catalytic activity and assembly of complex I. The protein is NADH-ubiquinone oxidoreductase chain 1 (mt-nd1) of Xenopus laevis (African clawed frog).